A 527-amino-acid chain; its full sequence is tRNA pseudouridine synthase Pus10 (527 aa).

Residues C21 and C24 each coordinate Zn(2+). Residues 42 to 87 adopt a coiled-coil conformation; that stretch reads KELLNELQKFLEPEKPELILEAPNPPLKKIRLHEDGIDNLSEDGKE. The residue at position 82 (S82) is a Phosphoserine. Positions 107 and 110 each coordinate Zn(2+). Residues 302–315 form an RNA binding forefinger loop region; that stretch reads TPWIIDGERKMESS. The active-site Nucleophile is the D342. The interval 440 to 455 is RNA binding thumb loop; that stretch reads QKTPLRVLHRRPLAVR.

The protein belongs to the pseudouridine synthase Pus10 family. Interacts with components of the microprocessor complex DROSHA and DGCR8. In terms of processing, proteolytically cleaved during TRAIL-induced cell death. Cleaved, in vitro, either by caspase-3 (CASP3) or caspase-8 (CASP8).

It is found in the nucleus. It localises to the cytoplasm. The protein resides in the mitochondrion. The enzyme catalyses uridine(55) in tRNA = pseudouridine(55) in tRNA. It carries out the reaction uridine(54) in tRNA = pseudouridine(54) in tRNA. Its function is as follows. Protein with different functions depending on its subcellular location: involved in miRNA processing in the nucleus and acts as a tRNA pseudouridylate synthase in the cytoplasm. In the cytoplasm, acts as a pseudouridylate synthase by catalyzing synthesis of pseudouridine(54) and pseudouridine(55) from uracil-54 and uracil-55, respectively, in the psi GC loop of a subset of tRNAs. tRNA pseudouridylate synthase activity is enhanced by the presence of 1-methyladenosine at position 53-61 of tRNAs. Does not show tRNA pseudouridylate synthase activity in the nucleus. In the nucleus, promotes primary microRNAs (pri-miRNAs) processing independently of its RNA pseudouridylate synthase activity. Binds pri-miRNAs. Modulator of TRAIL/TNFSF10-induced cell death via activation of procaspase-8 and BID cleavage. Required for the progression of the apoptotic signal through intrinsic mitochondrial cell death. The protein is tRNA pseudouridine synthase Pus10 of Mus musculus (Mouse).